Consider the following 146-residue polypeptide: VEWTDKERAIITDIFSHMDYDDIGPKALSRCLIVYPWTQRHFSGFGNLYNAEAIIGNANVAAHGIKVLHGLDRGVKNMDNIAATYAELSTLHSEKLHVDPDNFKLLSDCITIVVAAKLGHAFTAETQGALQKFLAVVVSALGKQYH.

The Globin domain maps to 2 to 146 (EWTDKERAII…VVSALGKQYH (145 aa)). H63 and H92 together coordinate heme b.

It belongs to the globin family. As to quaternary structure, hb 1 is a heterotetramer of two alpha-1 and two beta-1 chains. Red blood cells.

In terms of biological role, involved in oxygen transport from gills to the various peripheral tissues. In Gobionotothen gibberifrons (Humped rockcod), this protein is Hemoglobin subunit beta-1 (hbb1).